A 63-amino-acid polypeptide reads, in one-letter code: RKCLNTPLPLFYKTCPEGKDLCYKMNFKLLPKKLSIKRGCTDTCPKSSLLVKVVCCDTDKCNK.

4 disulfides stabilise this stretch: Cys3–Cys22, Cys15–Cys40, Cys44–Cys55, and Cys56–Cys61.

This sequence belongs to the three-finger toxin family. Short-chain subfamily. Orphan group XVI sub-subfamily. In terms of tissue distribution, expressed by the venom gland.

The protein resides in the secreted. This chain is Cytotoxin homolog S3C2, found in Aspidelaps scutatus (Shield-nose snake).